A 301-amino-acid chain; its full sequence is Porphobilinogen deaminase (301 aa).

C240 is subject to S-(dipyrrolylmethanemethyl)cysteine.

It belongs to the HMBS family. Monomer. Dipyrromethane is required as a cofactor.

It catalyses the reaction 4 porphobilinogen + H2O = hydroxymethylbilane + 4 NH4(+). It functions in the pathway porphyrin-containing compound metabolism; protoporphyrin-IX biosynthesis; coproporphyrinogen-III from 5-aminolevulinate: step 2/4. Its function is as follows. Tetrapolymerization of the monopyrrole PBG into the hydroxymethylbilane pre-uroporphyrinogen in several discrete steps. The chain is Porphobilinogen deaminase from Clostridioides difficile (strain 630) (Peptoclostridium difficile).